The following is a 449-amino-acid chain: Tryptophan--tRNA ligase (449 aa).

Residues 10–12 and 18–19 contribute to the ATP site; these read TTT and GN. The short motif at 11–19 is the 'HIGH' region element; that stretch reads TTGTPHLGN. Asp143 serves as a coordination point for L-tryptophan. ATP is bound by residues 155 to 157, Leu197, and 204 to 208; these read GRD and KMSKS. A 'KMSKS' region motif is present at residues 204–208; sequence KMSKS.

The protein belongs to the class-I aminoacyl-tRNA synthetase family. As to quaternary structure, homodimer.

Its subcellular location is the cytoplasm. The enzyme catalyses tRNA(Trp) + L-tryptophan + ATP = L-tryptophyl-tRNA(Trp) + AMP + diphosphate + H(+). In terms of biological role, catalyzes the attachment of tryptophan to tRNA(Trp). The protein is Tryptophan--tRNA ligase of Pseudomonas syringae pv. tomato (strain ATCC BAA-871 / DC3000).